The primary structure comprises 141 residues: Large ribosomal subunit protein uL11 (141 aa).

The protein belongs to the universal ribosomal protein uL11 family. Part of the ribosomal stalk of the 50S ribosomal subunit. Interacts with L10 and the large rRNA to form the base of the stalk. L10 forms an elongated spine to which L12 dimers bind in a sequential fashion forming a multimeric L10(L12)X complex. One or more lysine residues are methylated.

Forms part of the ribosomal stalk which helps the ribosome interact with GTP-bound translation factors. This chain is Large ribosomal subunit protein uL11, found in Clostridium novyi (strain NT).